The following is a 526-amino-acid chain: Importin subunit alpha-1a (526 aa).

One can recognise an IBB domain in the interval 1-58; sequence MSLRPSERVEVRRNRYKVAVDAEEGRRRREDNMVEIRKSRREESLLKKRREGLQAQAP. ARM repeat units lie at residues 105–145, 148–187, 190–230, 232–271, 274–313, 316–356, 359–398, and 402–441; these read SPPI…NIAS, SENT…NVAG, PKCR…NFCR, KPQP…YLSD, NDKI…NIVT, DAQT…NITA, KDQI…NATS, and HDQI…NILK.

The protein belongs to the importin alpha family. Forms a complex with importin subunit beta-1. The whole complex, most stable and composed of importin alpha, importin beta and NLS substrate, is referred to as PTAC or pore targeting complex. Interacts with mungbean yellow mosaic virus capsid protein. Highly expressed in callus, followed by root and etiolated leaf. Low expression in green leaf.

It is found in the cytoplasm. Its subcellular location is the perinuclear region. Functions in nuclear protein import. Binds specifically and directly to substrates containing either a simple or bipartite NLS motif. Promotes docking of import substrates to the nuclear envelope. This is Importin subunit alpha-1a from Oryza sativa subsp. japonica (Rice).